Reading from the N-terminus, the 199-residue chain is Nucleoside triphosphate pyrophosphatase (199 aa).

D76 serves as the catalytic Proton acceptor.

Belongs to the Maf family. A divalent metal cation serves as cofactor.

It localises to the cytoplasm. It carries out the reaction a ribonucleoside 5'-triphosphate + H2O = a ribonucleoside 5'-phosphate + diphosphate + H(+). It catalyses the reaction a 2'-deoxyribonucleoside 5'-triphosphate + H2O = a 2'-deoxyribonucleoside 5'-phosphate + diphosphate + H(+). Nucleoside triphosphate pyrophosphatase. May have a dual role in cell division arrest and in preventing the incorporation of modified nucleotides into cellular nucleic acids. In Caulobacter vibrioides (strain ATCC 19089 / CIP 103742 / CB 15) (Caulobacter crescentus), this protein is Nucleoside triphosphate pyrophosphatase.